The primary structure comprises 93 residues: Large ribosomal subunit protein bL27 (93 aa).

Positions 1-9 (MIKINLQLF) are excised as a propeptide.

It belongs to the bacterial ribosomal protein bL27 family. The N-terminus is cleaved by ribosomal processing cysteine protease Prp.

The chain is Large ribosomal subunit protein bL27 from Ruminiclostridium cellulolyticum (strain ATCC 35319 / DSM 5812 / JCM 6584 / H10) (Clostridium cellulolyticum).